A 199-amino-acid chain; its full sequence is Heparin-binding hemagglutinin (199 aa).

Positions 162–180 (KAAPAKKAAPAKKAAPAKK) are enriched in low complexity. A disordered region spans residues 162–199 (KAAPAKKAAPAKKAAPAKKAAAKKAPAKKAAAKKVTQK). The segment covering 181-199 (AAAKKAPAKKAAAKKVTQK) has biased composition (basic residues).

The protein to M.leprae HbhA. Post-translationally, glycosylated. Glycosylation may protect the protein from proteolytic degradation and be important for hemagglutination. It suggests that the carbohydrate moiety may be located within the C-terminal domain of HbhA.

The protein localises to the cell surface. Functionally, required for extrapulmonary dissemination. Mediates adherence to epithelial cells by binding to sulfated glycoconjugates present at the surface of these cells. In Mycobacterium tuberculosis (strain CDC 1551 / Oshkosh), this protein is Heparin-binding hemagglutinin (hbhA).